The following is a 62-amino-acid chain: Small EDRK-rich factor 1 (62 aa).

Composition is skewed to basic and acidic residues over residues 1-30 and 50-62; these read MARG…KEDS and AANE…TREK. The disordered stretch occupies residues 1–62; sequence MARGNQRELA…ERKSMQTREK (62 aa).

It belongs to the SERF family. As to quaternary structure, interacts with SNCA; this interaction promotes the aggregation of SNCA.

It localises to the cytoplasm. Its subcellular location is the cytosol. The protein resides in the nucleus. Functionally, positive regulator of amyloid protein aggregation and proteotoxicity. Induces conformational changes in amyloid proteins, such as APP, HTT, and SNCA, driving them into compact formations preceding the formation of aggregates. The polypeptide is Small EDRK-rich factor 1 (SERF1) (Bos taurus (Bovine)).